The primary structure comprises 813 residues: Histone acetyltransferase KAT2B (813 aa).

2 disordered regions span residues 1–55 and 380–423; these read MAEA…GGSA and NSTS…EAKR. Over residues 32–46 the composition is skewed to low complexity; sequence ASCGPATAVAAAGTA. Residues 380–391 are compositionally biased toward polar residues; the sequence is NSTSHEQINGGR. The segment covering 406 to 423 has biased composition (basic and acidic residues); that stretch reads PGEKRKMNNSHAPEEAKR. The N-acetyltransferase domain occupies 484 to 632; the sequence is LNQKPNKKIL…GATLMGCELN (149 aa). Glutamate 551 serves as the catalytic Proton donor/acceptor. Acetyl-CoA is bound by residues 555 to 557, 562 to 568, and 593 to 596; these read CAV, QVKGYGT, and YAIG. Residues 704–808 form the Bromo domain; that stretch reads KDPEQLYSTL…KFFFSKIKEA (105 aa).

Belongs to the acetyltransferase family. GCN5 subfamily. Interacts with BCAS3. Interacts with SIRT1. Interacts with EP300, CREBBP and DDX17. Component of a large chromatin remodeling complex, at least composed of MYSM1, KAT2B/PCAF, RBM10 and KIF11/TRIP5. Interacts with KLF1; the interaction does not acetylate KLF1 and there is no enhancement of its transactivational activity. Interacts with NFE4. Interacts with MECOM. Interacts with NR2C2 (hypophosphorylated and unsumoylated form); the interaction promotes the transactivation activity of NR2C2. Interacts with NFE4. Interacts with MECOM. Interacts with E2F1; the interaction acetylates E2F1 augmenting its DNA-binding and transcriptional activity. Interacts with NPAS2, BMAL1 and CLOCK. Interacts (unsumoylated form) with NR2C1; the interaction promotes transactivation activity. Interacts with CEBPB. Interacts with NR4A3. Interacts with TBX5. Interacts with PLK4. Interacts with RB1; this interaction leads to RB1 acetylation. Interacts with VRK1.

The protein localises to the nucleus. The protein resides in the cytoplasm. It localises to the cytoskeleton. It is found in the microtubule organizing center. Its subcellular location is the centrosome. It carries out the reaction L-lysyl-[histone] + acetyl-CoA = N(6)-acetyl-L-lysyl-[histone] + CoA + H(+). It catalyses the reaction L-lysyl-[protein] + acetyl-CoA = N(6)-acetyl-L-lysyl-[protein] + CoA + H(+). The catalysed reaction is spermidine + acetyl-CoA = N(8)-acetylspermidine + CoA + H(+). Its function is as follows. Functions as a histone acetyltransferase (HAT) to promote transcriptional activation. Has significant histone acetyltransferase activity with core histones (H3 and H4), and also with nucleosome core particles. Has a a strong preference for acetylation of H3 at 'Lys-9' (H3K9ac). Also acetylates non-histone proteins, such as ACLY, MAPRE1/EB1, PLK4, RRP9/U3-55K and TBX5. Acts as a circadian transcriptional coactivator which enhances the activity of the circadian transcriptional activators: NPAS2-BMAL1 and CLOCK-BMAL1 heterodimers. Involved in heart and limb development by mediating acetylation of TBX5, acetylation regulating nucleocytoplasmic shuttling of TBX5. Acts as a negative regulator of centrosome amplification by mediating acetylation of PLK4. Acetylates RRP9/U3-55K, a core subunit of the U3 snoRNP complex, impairing pre-rRNA processing. Acetylates MAPRE1/EB1, promoting dynamic kinetochore-microtubule interactions in early mitosis. Also acetylates spermidine. The polypeptide is Histone acetyltransferase KAT2B (Mus musculus (Mouse)).